Reading from the N-terminus, the 376-residue chain is UDP-4-amino-4,6-dideoxy-N-acetyl-beta-L-altrosamine transaminase (376 aa).

Substrate is bound by residues Tyr4, 24–27 (EILT), Ala54, and Ser176. An N6-(pyridoxal phosphate)lysine modification is found at Lys181. Residues Asn226 and 311–314 (QVHY) each bind substrate.

This sequence belongs to the DegT/DnrJ/EryC1 family.

It catalyses the reaction UDP-4-amino-4,6-dideoxy-N-acetyl-beta-L-altrosamine + 2-oxoglutarate = UDP-2-acetamido-2,6-dideoxy-beta-L-arabino-hex-4-ulose + L-glutamate. Catalyzes the second step in the biosynthesis of pseudaminic acid, a sialic-acid-like sugar that is used to modify flagellin. Uses UDP-2-acetamido-2,6-dideoxy-beta-L-arabino-4-hexulose as substrate producing UDP-4-amino-4,6-dideoxy-beta-L-AltNAc. In Campylobacter jejuni subsp. jejuni serotype O:2 (strain ATCC 700819 / NCTC 11168), this protein is UDP-4-amino-4,6-dideoxy-N-acetyl-beta-L-altrosamine transaminase (pseC).